The following is a 239-amino-acid chain: Ribonuclease 3 (239 aa).

An RNase III domain is found at 18–141 (YLTLEKALGY…LMAGVYLEAG (124 aa)). Glu54 is a Mg(2+) binding site. The active site involves Asp58. Mg(2+) is bound by residues Ser127 and Glu130. Glu130 is an active-site residue. One can recognise a DRBM domain in the interval 168 to 237 (DYKTALQELT…AYQALQKLKE (70 aa)).

Belongs to the ribonuclease III family. In terms of assembly, homodimer. Mg(2+) is required as a cofactor.

The protein resides in the cytoplasm. It carries out the reaction Endonucleolytic cleavage to 5'-phosphomonoester.. Digests double-stranded RNA. Involved in the processing of primary rRNA transcript to yield the immediate precursors to the large and small rRNAs (23S and 16S). Processes some mRNAs, and tRNAs when they are encoded in the rRNA operon. Processes pre-crRNA and tracrRNA of type II CRISPR loci if present in the organism. This Helicobacter pylori (strain J99 / ATCC 700824) (Campylobacter pylori J99) protein is Ribonuclease 3.